The following is a 393-amino-acid chain: Stearoyl-[acyl-carrier-protein] 9-desaturase, chloroplastic (393 aa).

A chloroplast-targeting transit peptide spans 1–30 (MALNFNSPTFQSIKTTRRPCSPLRSPRVFM). 6 residues coordinate Fe cation: E135, E173, H176, E226, E259, and H262.

The protein belongs to the fatty acid desaturase type 2 family. In terms of assembly, homodimer. Fe(2+) is required as a cofactor.

It is found in the plastid. It localises to the chloroplast. It catalyses the reaction octadecanoyl-[ACP] + 2 reduced [2Fe-2S]-[ferredoxin] + O2 + 2 H(+) = (9Z)-octadecenoyl-[ACP] + 2 oxidized [2Fe-2S]-[ferredoxin] + 2 H2O. The protein operates within lipid metabolism; fatty acid metabolism. In terms of biological role, converts stearoyl-ACP to oleoyl-ACP by introduction of a cis double bond between carbons 9 and 10 of the acyl chain. This is Stearoyl-[acyl-carrier-protein] 9-desaturase, chloroplastic from Solanum commersonii (Commerson's wild potato).